The sequence spans 1427 residues: DNA-directed RNA polymerase subunit beta' (1427 aa).

Residues C66, C68, C81, and C84 each contribute to the Zn(2+) site. 3 residues coordinate Mg(2+): D472, D474, and D476. Zn(2+) contacts are provided by C815, C889, C896, and C899.

Belongs to the RNA polymerase beta' chain family. As to quaternary structure, the RNAP catalytic core consists of 2 alpha, 1 beta, 1 beta' and 1 omega subunit. When a sigma factor is associated with the core the holoenzyme is formed, which can initiate transcription. Mg(2+) serves as cofactor. Zn(2+) is required as a cofactor.

It catalyses the reaction RNA(n) + a ribonucleoside 5'-triphosphate = RNA(n+1) + diphosphate. Its function is as follows. DNA-dependent RNA polymerase catalyzes the transcription of DNA into RNA using the four ribonucleoside triphosphates as substrates. This is DNA-directed RNA polymerase subunit beta' from Bacteroides fragilis (strain ATCC 25285 / DSM 2151 / CCUG 4856 / JCM 11019 / LMG 10263 / NCTC 9343 / Onslow / VPI 2553 / EN-2).